Here is a 345-residue protein sequence, read N- to C-terminus: Adenosine kinase 2 (345 aa).

Aspartate 300 is a catalytic residue.

It belongs to the carbohydrate kinase PfkB family. Interacts with the begomovirus AL2 protein and the curtovirus L2 protein. Interacts with KIN11. It depends on Mg(2+) as a cofactor. Phosphorylated by KIN11. As to expression, widely expressed.

It is found in the cytoplasm. It catalyses the reaction adenosine + ATP = AMP + ADP + H(+). It functions in the pathway purine metabolism; AMP biosynthesis via salvage pathway; AMP from adenosine: step 1/1. With respect to regulation, inactivated by the begomovirus AL2 protein or the curtovirus L2 protein. In terms of biological role, ATP dependent phosphorylation of adenosine and other related nucleoside analogs to monophosphate derivatives. Essential to sustain methyl recycling. This chain is Adenosine kinase 2, found in Arabidopsis thaliana (Mouse-ear cress).